The chain runs to 196 residues: DnaA initiator-associating protein DiaA (196 aa).

Residues 34-196 form the SIS domain; that stretch reads MVQSLLNGNK…DNTLFPHQDD (163 aa).

Belongs to the SIS family. DiaA subfamily. In terms of assembly, homotetramer; dimer of dimers.

Required for the timely initiation of chromosomal replication via direct interactions with the DnaA initiator protein. The chain is DnaA initiator-associating protein DiaA from Photorhabdus laumondii subsp. laumondii (strain DSM 15139 / CIP 105565 / TT01) (Photorhabdus luminescens subsp. laumondii).